Consider the following 335-residue polypeptide: Glyceraldehyde-3-phosphate dehydrogenase (335 aa).

NAD(+) contacts are provided by residues 10 to 11 (RI), Asp31, Arg75, and Thr122. D-glyceraldehyde 3-phosphate contacts are provided by residues 152–154 (SCT) and Thr183. The active-site Nucleophile is the Cys153. Residue Asn184 participates in NAD(+) binding. D-glyceraldehyde 3-phosphate contacts are provided by residues Arg198, 211-212 (TG), and Arg234. Asn318 contributes to the NAD(+) binding site.

The protein belongs to the glyceraldehyde-3-phosphate dehydrogenase family. As to quaternary structure, homotetramer.

It localises to the cytoplasm. The enzyme catalyses D-glyceraldehyde 3-phosphate + phosphate + NAD(+) = (2R)-3-phospho-glyceroyl phosphate + NADH + H(+). The protein operates within carbohydrate degradation; glycolysis; pyruvate from D-glyceraldehyde 3-phosphate: step 1/5. In terms of biological role, catalyzes the oxidative phosphorylation of glyceraldehyde 3-phosphate (G3P) to 1,3-bisphosphoglycerate (BPG) using the cofactor NAD. The first reaction step involves the formation of a hemiacetal intermediate between G3P and a cysteine residue, and this hemiacetal intermediate is then oxidized to a thioester, with concomitant reduction of NAD to NADH. The reduced NADH is then exchanged with the second NAD, and the thioester is attacked by a nucleophilic inorganic phosphate to produce BPG. This chain is Glyceraldehyde-3-phosphate dehydrogenase (gap), found in Borreliella burgdorferi (strain ATCC 35210 / DSM 4680 / CIP 102532 / B31) (Borrelia burgdorferi).